An 83-amino-acid chain; its full sequence is Alpha-conotoxin QcIA (83 aa).

The first 21 residues, 1 to 21 (MGMRMMFTLFLLAVLSTTVVS), serve as a signal peptide directing secretion. The propeptide occupies 22–48 (FTLDRASNGRDAAADSKAADQIAQTVR). Cystine bridges form between Cys-51–Cys-57 and Cys-52–Cys-65. The ser-Xaa-Pro motif, crucial for potent interaction with nAChR stretch occupies residues 53-55 (SNP). A propeptide spanning residues 66 to 83 (RRTLMLQNPLNHDMSPSA) is cleaved from the precursor.

It belongs to the conotoxin A superfamily. In terms of tissue distribution, expressed by the venom duct.

The protein resides in the secreted. In terms of biological role, alpha-conotoxins bind to the nicotinic acetylcholine receptors (nAChR) and inhibit them. A synthetic amidated version of this toxin potently and preferentially antagonizes neuronal rat alpha-3-beta-2 (IC(50)=55.7 nM) and alpha-6/alpha-3-beta-4 (IC(50)=90.69 nM) nAChRs. This Conus quercinus (Oak cone) protein is Alpha-conotoxin QcIA.